The following is a 353-amino-acid chain: MPKKIRVLVIDDSALVRQILSKGLALDPSIEVVGTAGDPYIARDKIVKLQPDVLTLDVEMPRMDGVDFLRRLMPQYPLPVVMVSSLTQKGKQITLDSLDAGAVDFVSKPTSDIARGLKAMLSELCAKVKLASTANVSHWKAARTVVPARLKTLEKRALAESTDKVIAIGASTGGTEAIRKIIAQFPATMPGVVIVQHMPAGFTRLFAERLNQLCAMEVKEAATGDRIMPGRVLIGPGGFHMKVVRSGGFYQVRCEPGPPVKGHCPSVDVMMHSVAKHVGGNAIGVMLTGMGSDGAEGMRAMREAGARNLAQDEASCVVFGMPKVAYEMGGAHSLVSLDSMAPRIVDLLSERRI.

The 118-residue stretch at 6-123 (RVLVIDDSAL…ARGLKAMLSE (118 aa)) folds into the Response regulatory domain. Residue Asp57 is modified to 4-aspartylphosphate. Positions 159 to 351 (AESTDKVIAI…PRIVDLLSER (193 aa)) constitute a CheB-type methylesterase domain. Catalysis depends on residues Ser171, His197, and Asp293.

The protein belongs to the CheB family. Phosphorylated by CheA. Phosphorylation of the N-terminal regulatory domain activates the methylesterase activity.

Its subcellular location is the cytoplasm. It carries out the reaction [protein]-L-glutamate 5-O-methyl ester + H2O = L-glutamyl-[protein] + methanol + H(+). The catalysed reaction is L-glutaminyl-[protein] + H2O = L-glutamyl-[protein] + NH4(+). In terms of biological role, involved in chemotaxis. Part of a chemotaxis signal transduction system that modulates chemotaxis in response to various stimuli. Catalyzes the demethylation of specific methylglutamate residues introduced into the chemoreceptors (methyl-accepting chemotaxis proteins or MCP) by CheR. Also mediates the irreversible deamidation of specific glutamine residues to glutamic acid. This chain is Protein-glutamate methylesterase/protein-glutamine glutaminase, found in Syntrophotalea carbinolica (strain DSM 2380 / NBRC 103641 / GraBd1) (Pelobacter carbinolicus).